Consider the following 83-residue polypeptide: Small ribosomal subunit protein bS18A (83 aa).

Belongs to the bacterial ribosomal protein bS18 family. Part of the 30S ribosomal subunit. Forms a tight heterodimer with protein bS6.

In terms of biological role, binds as a heterodimer with protein bS6 to the central domain of the 16S rRNA, where it helps stabilize the platform of the 30S subunit. The sequence is that of Small ribosomal subunit protein bS18A from Mycolicibacterium vanbaalenii (strain DSM 7251 / JCM 13017 / BCRC 16820 / KCTC 9966 / NRRL B-24157 / PYR-1) (Mycobacterium vanbaalenii).